The primary structure comprises 670 residues: DNA ligase (670 aa).

Residues 35-39 (DSVYD), 84-85 (SL), and glutamate 116 contribute to the NAD(+) site. Lysine 118 serves as the catalytic N6-AMP-lysine intermediate. NAD(+)-binding residues include arginine 139, glutamate 176, lysine 293, and lysine 317. The Zn(2+) site is built by cysteine 411, cysteine 414, cysteine 429, and cysteine 435. A BRCT domain is found at 592–670 (VVKSEIAGKT…EEAFLKLLKS (79 aa)).

It belongs to the NAD-dependent DNA ligase family. LigA subfamily. It depends on Mg(2+) as a cofactor. Mn(2+) is required as a cofactor.

The enzyme catalyses NAD(+) + (deoxyribonucleotide)n-3'-hydroxyl + 5'-phospho-(deoxyribonucleotide)m = (deoxyribonucleotide)n+m + AMP + beta-nicotinamide D-nucleotide.. Its function is as follows. DNA ligase that catalyzes the formation of phosphodiester linkages between 5'-phosphoryl and 3'-hydroxyl groups in double-stranded DNA using NAD as a coenzyme and as the energy source for the reaction. It is essential for DNA replication and repair of damaged DNA. The protein is DNA ligase of Coxiella burnetii (strain Dugway 5J108-111).